A 677-amino-acid polypeptide reads, in one-letter code: Methionine--tRNA ligase (677 aa).

Positions 15–25 (PYANGSIHLGH) match the 'HIGH' region motif. Positions 146, 149, 159, and 162 each coordinate Zn(2+). The 'KMSKS' region motif lies at 333–337 (KMSKS). Residue K336 participates in ATP binding. The tRNA-binding domain occupies 575–677 (DFAKIDLRVA…DGAKPGQQVK (103 aa)).

It belongs to the class-I aminoacyl-tRNA synthetase family. MetG type 1 subfamily. In terms of assembly, homodimer. It depends on Zn(2+) as a cofactor.

The protein localises to the cytoplasm. The enzyme catalyses tRNA(Met) + L-methionine + ATP = L-methionyl-tRNA(Met) + AMP + diphosphate. In terms of biological role, is required not only for elongation of protein synthesis but also for the initiation of all mRNA translation through initiator tRNA(fMet) aminoacylation. The protein is Methionine--tRNA ligase of Salmonella agona (strain SL483).